Reading from the N-terminus, the 453-residue chain is UDP-N-acetylmuramate--L-alanine ligase (453 aa).

ATP is bound at residue 112–118; sequence GTHGKTT.

Belongs to the MurCDEF family.

It is found in the cytoplasm. The catalysed reaction is UDP-N-acetyl-alpha-D-muramate + L-alanine + ATP = UDP-N-acetyl-alpha-D-muramoyl-L-alanine + ADP + phosphate + H(+). The protein operates within cell wall biogenesis; peptidoglycan biosynthesis. Functionally, cell wall formation. In Bdellovibrio bacteriovorus (strain ATCC 15356 / DSM 50701 / NCIMB 9529 / HD100), this protein is UDP-N-acetylmuramate--L-alanine ligase.